The following is a 234-amino-acid chain: 2-C-methyl-D-erythritol 4-phosphate cytidylyltransferase (234 aa).

Belongs to the IspD/TarI cytidylyltransferase family. IspD subfamily.

It carries out the reaction 2-C-methyl-D-erythritol 4-phosphate + CTP + H(+) = 4-CDP-2-C-methyl-D-erythritol + diphosphate. Its pathway is isoprenoid biosynthesis; isopentenyl diphosphate biosynthesis via DXP pathway; isopentenyl diphosphate from 1-deoxy-D-xylulose 5-phosphate: step 2/6. Functionally, catalyzes the formation of 4-diphosphocytidyl-2-C-methyl-D-erythritol from CTP and 2-C-methyl-D-erythritol 4-phosphate (MEP). This chain is 2-C-methyl-D-erythritol 4-phosphate cytidylyltransferase, found in Thermosynechococcus vestitus (strain NIES-2133 / IAM M-273 / BP-1).